Here is a 1069-residue protein sequence, read N- to C-terminus: Carbamoyl phosphate synthase large chain (1069 aa).

The segment at M1–E401 is carboxyphosphate synthetic domain. The ATP site is built by R129, R169, G175, G176, K208, V210, E215, G241, I242, H243, Q284, and E298. In terms of domain architecture, ATP-grasp 1 spans R133–L327. The Mg(2+) site is built by Q284, E298, and N300. The Mn(2+) site is built by Q284, E298, and N300. Residues I402–V549 form an oligomerization domain region. Residues E550–N932 are carbamoyl phosphate synthetic domain. Positions D674–M864 constitute an ATP-grasp 2 domain. ATP is bound by residues R710, K749, L751, E755, G780, V781, H782, S783, Q823, and E835. Q823, E835, and N837 together coordinate Mg(2+). Positions 823, 835, and 837 each coordinate Mn(2+). The MGS-like domain maps to N932–K1069. The allosteric domain stretch occupies residues M933 to K1069.

Belongs to the CarB family. As to quaternary structure, composed of two chains; the small (or glutamine) chain promotes the hydrolysis of glutamine to ammonia, which is used by the large (or ammonia) chain to synthesize carbamoyl phosphate. Tetramer of heterodimers (alpha,beta)4. The cofactor is Mg(2+). Mn(2+) is required as a cofactor.

The catalysed reaction is hydrogencarbonate + L-glutamine + 2 ATP + H2O = carbamoyl phosphate + L-glutamate + 2 ADP + phosphate + 2 H(+). It carries out the reaction hydrogencarbonate + NH4(+) + 2 ATP = carbamoyl phosphate + 2 ADP + phosphate + 2 H(+). The protein operates within amino-acid biosynthesis; L-arginine biosynthesis; carbamoyl phosphate from bicarbonate: step 1/1. It participates in pyrimidine metabolism; UMP biosynthesis via de novo pathway; (S)-dihydroorotate from bicarbonate: step 1/3. Functionally, large subunit of the glutamine-dependent carbamoyl phosphate synthetase (CPSase). CPSase catalyzes the formation of carbamoyl phosphate from the ammonia moiety of glutamine, carbonate, and phosphate donated by ATP, constituting the first step of 2 biosynthetic pathways, one leading to arginine and/or urea and the other to pyrimidine nucleotides. The large subunit (synthetase) binds the substrates ammonia (free or transferred from glutamine from the small subunit), hydrogencarbonate and ATP and carries out an ATP-coupled ligase reaction, activating hydrogencarbonate by forming carboxy phosphate which reacts with ammonia to form carbamoyl phosphate. In Clostridium botulinum (strain Eklund 17B / Type B), this protein is Carbamoyl phosphate synthase large chain.